The primary structure comprises 150 residues: Large-conductance mechanosensitive channel (150 aa).

The next 2 membrane-spanning stretches (helical) occupy residues 19–39 (VGII…SDVL) and 85–105 (GIFL…FMLI).

It belongs to the MscL family. Homopentamer.

The protein resides in the cell inner membrane. Functionally, channel that opens in response to stretch forces in the membrane lipid bilayer. May participate in the regulation of osmotic pressure changes within the cell. This chain is Large-conductance mechanosensitive channel, found in Chlorobium limicola (strain DSM 245 / NBRC 103803 / 6330).